We begin with the raw amino-acid sequence, 247 residues long: 2,3-bisphosphoglycerate-dependent phosphoglycerate mutase (247 aa).

Substrate is bound by residues 8–15 (RHGESVWN), 21–22 (TG), Arg60, 87–90 (ERHY), Lys98, 114–115 (RR), and 183–184 (GN). His9 serves as the catalytic Tele-phosphohistidine intermediate. Glu87 serves as the catalytic Proton donor/acceptor.

Belongs to the phosphoglycerate mutase family. BPG-dependent PGAM subfamily.

It catalyses the reaction (2R)-2-phosphoglycerate = (2R)-3-phosphoglycerate. The protein operates within carbohydrate degradation; glycolysis; pyruvate from D-glyceraldehyde 3-phosphate: step 3/5. Catalyzes the interconversion of 2-phosphoglycerate and 3-phosphoglycerate. The polypeptide is 2,3-bisphosphoglycerate-dependent phosphoglycerate mutase (Thermobifida fusca (strain YX)).